Consider the following 209-residue polypeptide: uncharacterized protein (209 aa).

The protein belongs to the flavoredoxin family. The cofactor is FMN.

This is an uncharacterized protein from Halalkalibacterium halodurans (strain ATCC BAA-125 / DSM 18197 / FERM 7344 / JCM 9153 / C-125) (Bacillus halodurans).